Here is a 451-residue protein sequence, read N- to C-terminus: Phosphoglucosamine mutase (451 aa).

Ser107 acts as the Phosphoserine intermediate in catalysis. Mg(2+) contacts are provided by Ser107, Asp246, Asp248, and Asp250. At Ser107 the chain carries Phosphoserine.

The protein belongs to the phosphohexose mutase family. The cofactor is Mg(2+). Activated by phosphorylation.

It carries out the reaction alpha-D-glucosamine 1-phosphate = D-glucosamine 6-phosphate. Catalyzes the conversion of glucosamine-6-phosphate to glucosamine-1-phosphate. The polypeptide is Phosphoglucosamine mutase (Burkholderia cenocepacia (strain HI2424)).